A 517-amino-acid polypeptide reads, in one-letter code: Crotonobetaine/carnitine--CoA ligase (517 aa).

The protein belongs to the ATP-dependent AMP-binding enzyme family.

The enzyme catalyses 4-(trimethylamino)butanoate + ATP + CoA = 4-(trimethylamino)butanoyl-CoA + AMP + diphosphate. The catalysed reaction is crotonobetaine + ATP + CoA = crotonobetainyl-CoA + AMP + diphosphate. It catalyses the reaction (R)-carnitine + ATP + CoA = (R)-carnitinyl-CoA + AMP + diphosphate. Its pathway is amine and polyamine metabolism; carnitine metabolism. Its function is as follows. Catalyzes the transfer of CoA to carnitine, generating the initial carnitinyl-CoA needed for the CaiB reaction cycle. Also has activity toward crotonobetaine and gamma-butyrobetaine. In Escherichia coli O1:K1 / APEC, this protein is Crotonobetaine/carnitine--CoA ligase.